The primary structure comprises 191 residues: Superoxide dismutase [Mn/Fe] (191 aa).

His-27, His-74, Asp-157, and His-161 together coordinate Fe(3+). His-27, His-74, Asp-157, and His-161 together coordinate Mn(2+).

The protein belongs to the iron/manganese superoxide dismutase family. As to quaternary structure, homodimer. Mn(2+) serves as cofactor. The cofactor is Fe(3+).

The enzyme catalyses 2 superoxide + 2 H(+) = H2O2 + O2. Its activity is regulated as follows. Inhibited by hydrogen peroxide. Functionally, destroys superoxide anion radicals which are normally produced within the cells and which are toxic to biological systems. Catalyzes the dismutation of superoxide anion radicals into O2 and H2O2 by successive reduction and oxidation of the transition metal ion at the active site. This is Superoxide dismutase [Mn/Fe] (sodB) from Porphyromonas gingivalis (strain ATCC BAA-308 / W83).